The following is a 669-amino-acid chain: Very long-chain fatty acid transport protein (669 aa).

Residues 1–5 lie on the Cytoplasmic side of the membrane; that stretch reads MSPIQ. The chain crosses the membrane as a helical span at residues 6–26; the sequence is VVVFALSRIFLLLFRLIKLII. Over 27–148 the chain is Extracellular; the sequence is TPIQKSLGYL…YVAIDCTNKP (122 aa). A helical transmembrane segment spans residues 149–169; sequence LFVFLWLSLWNIGAIPAFLNY. Residues 170-270 lie on the Cytoplasmic side of the membrane; the sequence is NTKGTPLVHS…TGLPKSAIMS (101 aa). 256-267 serves as a coordination point for ATP; that stretch reads YTSGTTGLPKSA. Residues 271-339 lie within the membrane without spanning it; sequence WRKSSVGCQV…FWKQVYLTGA (69 aa). Topologically, residues 340–669 are cytoplasmic; it reads THIQYVGEVC…EAIDAQTIKL (330 aa). The FACS signature appears at 501 to 551; the sequence is DAWYRCGDLLKADEYGLWYFLDRMGDTFRWKSENVSTTEVEDQLTASNKEQ. The C-terminal peroxisome targeting signal (PTS1) signature appears at 667 to 669; that stretch reads IKL.

Belongs to the ATP-dependent AMP-binding enzyme family. In terms of assembly, interacts with fatty acyl-CoA synthetases FAA1 and FAA4.

It is found in the lipid droplet. It localises to the cell membrane. The protein localises to the peroxisome membrane. Its subcellular location is the peroxisome. The catalysed reaction is a very long-chain fatty acid + ATP + CoA = a very long-chain fatty acyl-CoA + AMP + diphosphate. It catalyses the reaction tetracosanoate + ATP + CoA = tetracosanoyl-CoA + AMP + diphosphate. Its function is as follows. Acyl-CoA synthetase required for both the import of long chain fatty acids (LCFAs) (C14-C18) and the activation very long chain fatty acids (VLCFAs) (C20-C26) by esterification of the fatty acids into metabolically active CoA-thioesters for subsequent degradation or incorporation into phospholipids. The transport and fatty acyl-CoA synthetase activities are genetically separable and are thus independent activities. Esterifies VLCFAs in the peroxisome matrix. The VLCFAs are actively transported into peroxisomes by a PXA1-PXA2 heterodimeric transporter in the peroxisomal membrane. This is Very long-chain fatty acid transport protein (FAT1) from Saccharomyces cerevisiae (strain ATCC 204508 / S288c) (Baker's yeast).